A 423-amino-acid chain; its full sequence is Dihydroorotase-like protein (423 aa).

It belongs to the metallo-dependent hydrolases superfamily. DHOase family. PyrC' subfamily. In terms of assembly, heterododecamer of 6 active PyrB subunits and 6 non-catalytic PyrC' subunits.

In terms of biological role, non-functional DHOase. The polypeptide is Dihydroorotase-like protein (pyrC') (Pseudomonas aeruginosa (strain ATCC 15692 / DSM 22644 / CIP 104116 / JCM 14847 / LMG 12228 / 1C / PRS 101 / PAO1)).